Reading from the N-terminus, the 499-residue chain is 6-hydroxynicotinate reductase (499 aa).

4Fe-4S ferredoxin-type domains are found at residues 1-29 (MFKI…YEKK) and 31-61 (KGAI…NDAP). [4Fe-4S] cluster is bound by residues cysteine 9, cysteine 12, cysteine 15, cysteine 19, cysteine 41, cysteine 44, cysteine 47, and cysteine 51.

In terms of assembly, homotetramer. An oxidized flavin is required as a cofactor. Requires [2Fe-2S] cluster as cofactor. It depends on [4Fe-4S] cluster as a cofactor.

It catalyses the reaction 1,4,5,6-tetrahydro-6-oxonicotinate + oxidized 2[4Fe-4S]-[ferredoxin] = 6-hydroxynicotinate + reduced 2[4Fe-4S]-[ferredoxin] + 2 H(+). Its pathway is cofactor degradation; nicotinate degradation; propanoate and pyruvate from 6-hydroxynicotinate: step 1/8. Its function is as follows. Catalyzes the reversible reduction of 6-hydroxynicotinate to 6-oxo-1,4,5,6-tetrahydronicotinate. This Eubacterium barkeri (Clostridium barkeri) protein is 6-hydroxynicotinate reductase.